Consider the following 1153-residue polypeptide: Cingulin (1153 aa).

The head stretch occupies residues 1 to 342 (MAEPRGPVDH…LVMTTGSAKV (342 aa)). The tract at residues 17-37 (ITEPAGDAQMRTGRRPAKDAR) is disordered. Positions 38–52 (ANTYGVAVRVQGIAG) match the ZIM motif. Residues 44–57 (AVRVQGIAGQPFVV) form an interaction with TJP1/ZO1 region. Residues Ser-86, Ser-126, Ser-128, Ser-131, Ser-146, Ser-205, Ser-208, and Ser-324 each carry the phosphoserine modification. Disordered stretches follow at residues 131-151 (SLLGPAPLGPGHRSTSLLELG) and 177-253 (DRHQ…SRAR). Basic and acidic residues predominate over residues 207 to 220 (DSRHLRDPPEDRRS). Positions 343–1110 (LAGQGELAQK…ALEKDSWRKA (768 aa)) form a coiled coil. Lys-562 is subject to N6-acetyllysine. Disordered stretches follow at residues 755 to 796 (AQRG…QKRL), 823 to 861 (QSQLEDYKEKSRREVADAQRQAKEWASEAEKSSGGLSRL), and 1110 to 1131 (AARSAAESSLQQEGLSSDEEFD). 2 stretches are compositionally biased toward basic and acidic residues: residues 772–796 (ALEEEGKQREALRRGKAELEEQKRL) and 827–853 (EDYKEKSRREVADAQRQAKEWASEAEK). Residues 1111–1153 (ARSAAESSLQQEGLSSDEEFDGVYNPNSIASLLTESGLQTSSC) are tail. Polar residues predominate over residues 1115-1124 (AESSLQQEGL). Phosphoserine occurs at positions 1125 and 1126.

The protein belongs to the cingulin family. Homodimer. Interacts with TJP1/ZO1 and SPEF1.

The protein localises to the cell junction. The protein resides in the tight junction. Probably plays a role in the formation and regulation of the tight junction (TJ) paracellular permeability barrier. The protein is Cingulin of Sorex araneus (Eurasian common shrew).